The following is a 643-amino-acid chain: MSDMVKITFPDGAVKEFAKGTTTEDIAASISPGLKKKSLAGKLNGKEIDLRTPINEDGTVEIITEGSEEGLQIMRHSAAHLLAQAIKRIYKDVKFGVGPVIENGFYYDVEMDEAITPEDLPKIEKEMKKIVNANLPIVRKEVSREEAKARFAEIGDDLKLELLDAIPEGETVSIYEQGEFFDLCRGVHVPSTGKIKEFKLLSLAGAYWRGDSKNQMLQRVYGTAFFKKADLEEHLRMLEEAKERDHRKLGKELKLFANSQKVGQGLPLWLPKGATIRRVIERYIVDKEISLGYEHVYTPVLGSKELYETSGHWDHYQEGMFPPMEMDNETLVLRPMNCPHHMMIYKQDIHSYRELPIRIAELGTMHRYEMSGALSGLQRVRGMTLNDAHIFVRPDQIKDEFIRTVRLIQDVYEDFGLSDYTFRLSYRDPEDTEKYFDDDEMWNKAQSMLKEAMDEIGHDYYEAEGEAAFYGPKLDVQVKTAIGKEETLSTVQLDFLLPERFDLTYIGEDGKQHRPVVIHRGVVSTMERFVAFLIEEHKGALPTWLAPVQFQVIPVSPAVHLDYAKKVQERLQCEGLRVEVDSRDEKIGYKIREAQMQKIPYMLVVGDQEAENGAVNVRKYGEQNSETISLDEFVKKAVAEAKK.

The TGS domain maps to 3–64; that stretch reads DMVKITFPDG…NEDGTVEIIT (62 aa). Residues 245 to 542 form a catalytic region; sequence DHRKLGKELK…LIEEHKGALP (298 aa). The Zn(2+) site is built by Cys338, His389, and His519.

This sequence belongs to the class-II aminoacyl-tRNA synthetase family. As to quaternary structure, homodimer. The cofactor is Zn(2+).

It is found in the cytoplasm. The enzyme catalyses tRNA(Thr) + L-threonine + ATP = L-threonyl-tRNA(Thr) + AMP + diphosphate + H(+). In terms of biological role, catalyzes the attachment of threonine to tRNA(Thr) in a two-step reaction: L-threonine is first activated by ATP to form Thr-AMP and then transferred to the acceptor end of tRNA(Thr). Also edits incorrectly charged L-seryl-tRNA(Thr). This Bacillus subtilis (strain 168) protein is Threonine--tRNA ligase 1 (thrS).